The sequence spans 5082 residues: Malformin synthetase mlfA (5082 aa).

The segment at 225–616 is adenylation 1; the sequence is ERHAANRPHS…CGRADTQVKL (392 aa). The Carrier 1 domain maps to 749-822; it reads SRLEQKIQLA…EAASLAEVQE (74 aa). An O-(pantetheine 4'-phosphoryl)serine modification is found at S783. The condensation 1 stretch occupies residues 860–1291; sequence ENVFPCTTMQ…ALNTLSLLQA (432 aa). The adenylation 2 stretch occupies residues 1319 to 1708; it reads DRWVTRQPEG…GRKDTQVKLR (390 aa). A Carrier 2 domain is found at 1846-1923; it reads TPTLELERTL…QLAAEVGEPA (78 aa). An O-(pantetheine 4'-phosphoryl)serine modification is found at S1883. 2 disordered regions span residues 1924–1953 and 1986–2012; these read GQSASSASSTTEEGFTFSTPDDSSTNDGVD and GGSSSNKTPSVSSSSSSSSSSKRKKNA. 2 stretches are compositionally biased toward low complexity: residues 1926–1950 and 1988–2005; these read SASSASSTTEEGFTFSTPDDSSTND and SSSNKTPSVSSSSSSSSS. The tract at residues 2058–2473 is condensation 2; sequence EDIYPATALQ…AVSCSDKETL (416 aa). Positions 2496-2888 are adenylation 3; the sequence is RRTPHAPAVC…IGRRDGQLKL (393 aa). A Carrier 3 domain is found at 3024 to 3100; sequence RPVTSQEHEM…QLICHLNTIR (77 aa). O-(pantetheine 4'-phosphoryl)serine is present on S3061. 2 condensation regions span residues 3117-3582 and 3603-4022; these read WVAL…TYDQ and NIYP…EHLV. An adenylation 4 region spans residues 4047–4426; that stretch reads HNSRQAVFDD…VGRKDNQIKF (380 aa). One can recognise a Carrier 4 domain in the interval 4560-4636; the sequence is MPSTAAERKM…DLSDQAKSLI (77 aa). S4597 is subject to O-(pantetheine 4'-phosphoryl)serine. A condensation 5 region spans residues 4673–5000; that stretch reads DVLPTTSFQR…LQTIVQHQNN (328 aa).

It belongs to the NRP synthetase family.

The protein operates within secondary metabolite biosynthesis. Functionally, nonribosomal peptide synthetase; part of the gene cluster that mediates the biosynthesis of malformins, cyclic pentapeptides with a disulfide bond between 2 consecutive cysteins, that show potential anti-tumor as well as antimalarial and antitrypanosomal properties. The nonribosomal peptide synthetase mlfA is responsible of the formation of the cyclic pentapeptide. The malformin biosynthesis clusters in malformin-producing fungi also contain enzymes involved in the formation of the disulfide bond between the two consecutive cysteins within malformins, in addition to additional tailoring enzymes such as methyltransferases or oxidoreductases. They are also composed of up to 4 major facilitator superfamily transporters, and transcription factors probably involved in the regulation of the expression of those clusters. In Aspergillus luchuensis (strain CBS 106.47), this protein is Malformin synthetase mlfA.